The chain runs to 317 residues: L-lactate dehydrogenase (317 aa).

Residues Val-18, Asp-39, Lys-44, Tyr-69, and 83–84 (GA) contribute to the NAD(+) site. Substrate-binding positions include Gln-86, Arg-92, and 124-127 (NPVD). NAD(+) is bound by residues 122–124 (VTN) and Ser-147. Residue 152–155 (DTAR) coordinates substrate. Arg-157 and His-172 together coordinate beta-D-fructose 1,6-bisphosphate. His-179 functions as the Proton acceptor in the catalytic mechanism. Tyr-225 bears the Phosphotyrosine mark. Thr-234 serves as a coordination point for substrate.

This sequence belongs to the LDH/MDH superfamily. LDH family. In terms of assembly, homotetramer.

It is found in the cytoplasm. The enzyme catalyses (S)-lactate + NAD(+) = pyruvate + NADH + H(+). Its pathway is fermentation; pyruvate fermentation to lactate; (S)-lactate from pyruvate: step 1/1. With respect to regulation, allosterically activated by fructose 1,6-bisphosphate (FBP). Catalyzes the conversion of lactate to pyruvate. The chain is L-lactate dehydrogenase from Acetivibrio thermocellus (strain ATCC 27405 / DSM 1237 / JCM 9322 / NBRC 103400 / NCIMB 10682 / NRRL B-4536 / VPI 7372) (Clostridium thermocellum).